A 158-amino-acid chain; its full sequence is Protein-export protein SecB (158 aa).

The protein belongs to the SecB family. In terms of assembly, homotetramer, a dimer of dimers. One homotetramer interacts with 1 SecA dimer.

It localises to the cytoplasm. One of the proteins required for the normal export of preproteins out of the cell cytoplasm. It is a molecular chaperone that binds to a subset of precursor proteins, maintaining them in a translocation-competent state. It also specifically binds to its receptor SecA. The sequence is that of Protein-export protein SecB from Anaplasma phagocytophilum (strain HZ).